Reading from the N-terminus, the 185-residue chain is MQRLPGVGPKTAQRLALHILKRPESEVEALAQALVEAKKQIGLCSVCFHLSSEPVCEICRNPNRENNTICVVADSRDVIALEKTREFKGKYHVLGGVISPMDGIGPEQLTITPLLRRVSQQQPKEVILAISPSVEGETTTLYVGQLLKPFTKVTRIAFGLPVGGDLEYADEITLARALEGRRELD.

Residues 44 to 59 (CSVCFHLSSEPVCEIC) form a C4-type zinc finger. The 95-residue stretch at 67–161 (NTICVVADSR…KVTRIAFGLP (95 aa)) folds into the Toprim domain.

This sequence belongs to the RecR family.

In terms of biological role, may play a role in DNA repair. It seems to be involved in an RecBC-independent recombinational process of DNA repair. It may act with RecF and RecO. This chain is Recombination protein RecR, found in Trichormus variabilis (strain ATCC 29413 / PCC 7937) (Anabaena variabilis).